Here is a 119-residue protein sequence, read N- to C-terminus: NADH-quinone oxidoreductase subunit A (119 aa).

Transmembrane regions (helical) follow at residues Phe-7–Gly-27, Leu-63–Val-83, and Ile-88–Ala-108.

Belongs to the complex I subunit 3 family. NDH-1 is composed of 14 different subunits. Subunits NuoA, H, J, K, L, M, N constitute the membrane sector of the complex.

The protein resides in the cell inner membrane. The catalysed reaction is a quinone + NADH + 5 H(+)(in) = a quinol + NAD(+) + 4 H(+)(out). Functionally, NDH-1 shuttles electrons from NADH, via FMN and iron-sulfur (Fe-S) centers, to quinones in the respiratory chain. The immediate electron acceptor for the enzyme in this species is believed to be ubiquinone. Couples the redox reaction to proton translocation (for every two electrons transferred, four hydrogen ions are translocated across the cytoplasmic membrane), and thus conserves the redox energy in a proton gradient. In Paraburkholderia xenovorans (strain LB400), this protein is NADH-quinone oxidoreductase subunit A.